The chain runs to 394 residues: DNA repair protein brc-2 (394 aa).

Basic and acidic residues predominate over residues 1-12 (MGDSSKKVKDSF). 2 disordered regions span residues 1 to 30 (MGDSSKKVKDSFDTISEPDSFDEPKGVPIS) and 56 to 136 (MLNS…EKKK). The interval 1–60 (MGDSSKKVKDSFDTISEPDSFDEPKGVPISMEPVFSTAAGIRIDVKQESIDKSKKMLNSD) is interaction with rad-51. Residues 28-62 (PISMEPVFSTAAGIRIDVKQESIDKSKKMLNSDLK) form a BRCA2 repeat-like region region. Over residues 56 to 73 (MLNSDLKSKSSSKGGFSS) the composition is skewed to low complexity. Positions 60–89 (DLKSKSSSKGGFSSPLVRKNNGSSAFVSPF) are interaction with rad-51-DNA complexes. Positions 124–134 (KKSKKHSKKEK) are enriched in basic residues. Residues 371-389 (WKDFGSYLKHKEDKKKRRS) are required for ssDNA binding.

Interacts (via N-terminus) with rad-51; regulates rad-51 recruitment to sites of DNA double strand breaks. As to expression, expressed in the germline, with highest expression in cells undergoing oogenesis.

Its subcellular location is the nucleus. It localises to the chromosome. Functionally, required for the homologous recombination repair of DNA double strand breaks, thereby playing a role in chromosome integrity. Acts by targeting rad-51 to sites of DNA damage and stabilizing rad-51-DNA filaments by blocking ATP hydrolysis catalyzed by rad-51. Promotes rad-51 mediated displacement-loop (D-loop) formation during strand invasion between the invading single-stranded DNA (ssDNA) and the homologous duplex DNA. Also functions independently of rad-51 in DNA double-strand break (DSB) repair by promoting DNA single-strand annealing (SSA) when the homologous recombination (HR) and non-homologous end joining (NHEJ) pathways are compromised. Binds selectively to single-stranded (ssDNA) via its C-terminus. Involved in telomere maintenance and replicative senescence. The sequence is that of DNA repair protein brc-2 from Caenorhabditis elegans.